A 413-amino-acid polypeptide reads, in one-letter code: uncharacterized protein (413 aa).

An N-terminal signal peptide occupies residues 1-22 (MKKSKASALLWLFSLVGFMLHA).

The protein resides in the periplasm. In terms of biological role, may be involved in ulvan degradation. Ulvan is the main polysaccharide component of the Ulvales (green seaweed) cell wall. It is composed of disaccharide building blocks comprising 3-sulfated rhamnose (Rha3S) linked to D-glucuronic acid (GlcA), L-iduronic acid (IduA), or D-xylose (Xyl). This is an uncharacterized protein from Formosa agariphila (strain DSM 15362 / KCTC 12365 / LMG 23005 / KMM 3901 / M-2Alg 35-1).